The chain runs to 287 residues: Glycine--tRNA ligase alpha subunit (287 aa).

The protein belongs to the class-II aminoacyl-tRNA synthetase family. Tetramer of two alpha and two beta subunits.

It localises to the cytoplasm. It carries out the reaction tRNA(Gly) + glycine + ATP = glycyl-tRNA(Gly) + AMP + diphosphate. The polypeptide is Glycine--tRNA ligase alpha subunit (Campylobacter jejuni (strain RM1221)).